Here is a 200-residue protein sequence, read N- to C-terminus: UPF0329 protein ECU06_1670 (200 aa).

Belongs to the UPF0329 family.

This chain is UPF0329 protein ECU06_1670, found in Encephalitozoon cuniculi (strain GB-M1) (Microsporidian parasite).